The chain runs to 742 residues: uncharacterized protein (742 aa).

The interval 1–102 (MMLLKRSNDN…FTQTKPNNTD (102 aa)) is disordered. Positions 18 to 28 (NRQNRQNNRQN) are enriched in low complexity. Basic and acidic residues predominate over residues 48-57 (RDSSRMDPVD). Polar residues-rich tracts occupy residues 60-69 (TLISFTSGKP) and 77-99 (HDTG…TKPN).

This is an uncharacterized protein from Acanthamoeba polyphaga mimivirus (APMV).